We begin with the raw amino-acid sequence, 595 residues long: Prolycopene isomerase, chloroplastic (595 aa).

A chloroplast-targeting transit peptide spans 1 to 56 (MDLCFQNPVKCGDRLFSALNTSTYYKLGTSNLGFNGPVLENRKKKKKLPRMVTVKS). Residue Val-57 is modified to N-acetylvaline.

Belongs to the carotenoid/retinoid oxidoreductase family. CrtISO subfamily. It depends on NAD(+) as a cofactor. Requires NADP(+) as cofactor. FAD serves as cofactor.

It localises to the plastid. Its subcellular location is the chloroplast membrane. It catalyses the reaction 7,7',9,9'-tetra-cis-lycopene = all-trans-lycopene. The protein operates within carotenoid biosynthesis; lycopene biosynthesis. In terms of biological role, carotene cis-trans-isomerase that converts 7,9,9'-tri-cis-neurosporene to 9'-cis-neurosporene and 7,9,9',7'-tetra-cis-lycopene (also known as prolycopene) into all-trans-lycopene. Isomerization requires redox-active components, suggesting that isomerization is achieved by a reversible redox reaction acting at specific double bonds. Isomerizes adjacent cis-double bonds at C7 and C9 pairwise into the trans-configuration, but is incapable of isomerizing single cis-double bonds at C9 and C9'. Carotenoid biosynthesis is partly required to form the prolamellar bodies of etioplasts. The chain is Prolycopene isomerase, chloroplastic (CRTISO) from Arabidopsis thaliana (Mouse-ear cress).